We begin with the raw amino-acid sequence, 236 residues long: MSIHAGGLQVPVSVIIPAAGSGRRMGGGTAKQFLPLRGEPVLVRTVRRFSECPLVDEIVIAAGDVEATRALVGHMPKVTRIVQGGAERQDSVWAALQAVHSRPRIVAVHDAARPLLTADVLKGVLQAAADHPAQVVAVPVQDTIKQVGPDGVVVATPDRSMLWAVQTPQVFWADVLVRAFRQAIADGFLGTDDASLVERIGVPVRVYRGHPGNLKLTTPTDFRLAELLLEEEARQC.

The protein belongs to the IspD/TarI cytidylyltransferase family. IspD subfamily.

The catalysed reaction is 2-C-methyl-D-erythritol 4-phosphate + CTP + H(+) = 4-CDP-2-C-methyl-D-erythritol + diphosphate. It functions in the pathway isoprenoid biosynthesis; isopentenyl diphosphate biosynthesis via DXP pathway; isopentenyl diphosphate from 1-deoxy-D-xylulose 5-phosphate: step 2/6. Its function is as follows. Catalyzes the formation of 4-diphosphocytidyl-2-C-methyl-D-erythritol from CTP and 2-C-methyl-D-erythritol 4-phosphate (MEP). This chain is 2-C-methyl-D-erythritol 4-phosphate cytidylyltransferase, found in Symbiobacterium thermophilum (strain DSM 24528 / JCM 14929 / IAM 14863 / T).